The following is a 309-amino-acid chain: Methionine synthase (309 aa).

Positions 201, 203, 224, and 285 each coordinate Zn(2+).

The protein belongs to the archaeal MetE family. The cofactor is Zn(2+).

It participates in amino-acid biosynthesis; L-methionine biosynthesis via de novo pathway. Is activated by phosphates. In terms of biological role, catalyzes the transfer of a methyl group to L-homocysteine resulting in methionine formation. Can use methylcobalamin and methylcobinamide as methyl donors, but methylcobalamin is not considered to be the physiological substrate. It was proposed that, in vivo, a so-far-unidentified enzyme catalyzes methyltransfer from 5-methyltetrahydromethanopterin (5-CH3-H4MPT) to a corrinoid protein, and that the MetE gene product catalyzes the further transfer to L-homocysteine. Is not active with L-cysteine, coenzyme M, coenzyme B, glutathione or dithiothreitol as substrate. The protein is Methionine synthase of Methanothermobacter marburgensis (strain ATCC BAA-927 / DSM 2133 / JCM 14651 / NBRC 100331 / OCM 82 / Marburg) (Methanobacterium thermoautotrophicum).